Here is a 701-residue protein sequence, read N- to C-terminus: Phytyl ester synthase 2, chloroplastic (701 aa).

Residues M1–V65 constitute a chloroplast transit peptide. The segment at S37–T64 is disordered.

This sequence belongs to the diacylglycerol acyltransferase family.

Its subcellular location is the plastid. It is found in the chloroplast. The protein localises to the plastoglobule. It catalyses the reaction a 1,2-diacyl-3-O-(beta-D-galactosyl)-sn-glycerol + a 1,2-diacylglycerol = an acyl-3-O-(beta-D-galactosyl)-sn-glycerol + a triacylglycerol. The enzyme catalyses a 1,2-diacylglycerol + a fatty acyl-CoA = a triacylglycerol + CoA. It carries out the reaction a fatty acyl-[ACP] + a 1,2-diacylglycerol = a triacylglycerol + holo-[ACP]. The catalysed reaction is phytol + a fatty acyl-CoA = a fatty acid phytyl ester + CoA. It catalyses the reaction phytol + tetradecanoyl-CoA = tetradecanoate phytyl ester + CoA. The enzyme catalyses a 1,3-diacylglycerol + a fatty acyl-CoA = a triacylglycerol + CoA. It carries out the reaction 1,2-dihexanoylglycerol + tetradecanoyl-CoA = 1,2-dihexanoyl-3-tetradecanoylglycerol + CoA. The catalysed reaction is 1,2-dihexanoylglycerol + hexadecanoyl-CoA = 1,2-dihexanoyl-3-hexadecanoylglycerol + CoA. It catalyses the reaction 1,2-dihexanoylglycerol + octadecanoyl-CoA = 1,2-dihexanoyl-3-octadecanoylglycerol + CoA. The enzyme catalyses (7Z,10Z,13Z)-hexadecatrienoyl-CoA + 1,2-dihexanoylglycerol = 1,2-dihexanoyl-3-(7Z,10Z,13Z-hexadecatrienoyl)-glycerol + CoA. It carries out the reaction 1,2-dihexanoylglycerol + (9Z)-octadecenoyl-CoA = 1,2-dihexanoyl-3-(9Z-octadecenoyl)-glycerol + CoA. The catalysed reaction is 1,2-dihexanoylglycerol + (9Z,12Z,15Z)-octadecatrienoyl-CoA = 1,2-dihexanoyl-3-(9Z,12Z,15Z-octadecatrienoyl)-glycerol + CoA. It catalyses the reaction phytol + decanoyl-CoA = decanoate phytyl ester + CoA. The enzyme catalyses (7Z,10Z,13Z)-hexadecatrienoyl-CoA + phytol = (7Z,10Z,13Z)-hexadecatrienoate phytyl ester + CoA. It carries out the reaction phytol + dodecanoyl-CoA = dodecanoate phytyl ester + CoA. Acyltransferase involved in fatty acid phytyl ester synthesis in chloroplasts, a process required for the maintenance of the photosynthetic membrane integrity during abiotic stress and senescence. Exhibits phytyl ester synthesis and diacylglycerol acyltransferase activities with broad substrate specificities, and can employ acyl-CoAs, acyl carrier proteins, and galactolipids as acyl donors. The protein is Phytyl ester synthase 2, chloroplastic of Arabidopsis thaliana (Mouse-ear cress).